Here is a 609-residue protein sequence, read N- to C-terminus: UvrABC system protein C (609 aa).

The 79-residue stretch at 16–94 (HLPGVYRHLD…IKSLRPRYNI (79 aa)) folds into the GIY-YIG domain. The 36-residue stretch at 203-238 (REVMDEIEARMLQASTELRFEEAAVLRDQMGSLSKV) folds into the UVR domain.

Belongs to the UvrC family. Interacts with UvrB in an incision complex.

The protein resides in the cytoplasm. Its function is as follows. The UvrABC repair system catalyzes the recognition and processing of DNA lesions. UvrC both incises the 5' and 3' sides of the lesion. The N-terminal half is responsible for the 3' incision and the C-terminal half is responsible for the 5' incision. This chain is UvrABC system protein C, found in Bordetella bronchiseptica (strain ATCC BAA-588 / NCTC 13252 / RB50) (Alcaligenes bronchisepticus).